The chain runs to 271 residues: Regulatory protein RecX (271 aa).

It belongs to the RecX family.

The protein resides in the cytoplasm. Functionally, modulates RecA activity. The sequence is that of Regulatory protein RecX from Geobacillus sp. (strain WCH70).